The sequence spans 478 residues: Zinc metalloproteinase/disintegrin VMP-II (478 aa).

An N-terminal signal peptide occupies residues 1–20 (MIQVLLVTICLAVFPYQGSS). Residues 21–190 (IILESGNVND…KASQLNLTPE (170 aa)) constitute a propeptide that is removed on maturation. The 197-residue stretch at 197-393 (RYIELVIVAD…HNPQCMLNEP (197 aa)) folds into the Peptidase M12B domain. Glu-200 and Asp-284 together coordinate Ca(2+). 3 disulfides stabilise this stretch: Cys-308–Cys-388, Cys-348–Cys-372, and Cys-350–Cys-355. His-333 provides a ligand contact to Zn(2+). The active site involves Glu-334. Zn(2+)-binding residues include His-337 and His-343. Positions 388 and 391 each coordinate Ca(2+). Positions 394-405 (LGTDTVSRNELL) are excised as a propeptide. Positions 414 to 478 (GSPANPCCDA…ADCPRNRFHA (65 aa)) constitute a Disintegrin domain. Cystine bridges form between Cys-420–Cys-443, Cys-434–Cys-440, Cys-439–Cys-464, and Cys-452–Cys-471. Residues 456–458 (RGD) carry the Cell attachment site motif.

This sequence belongs to the venom metalloproteinase (M12B) family. P-II subfamily. P-IIe sub-subfamily. Heterodimer; disulfide-linked (disintegrin). Zn(2+) serves as cofactor. In terms of tissue distribution, expressed by the venom gland.

It is found in the secreted. Impairs hemostasis in the envenomed animal. Functionally, this recombinant protein inhibits ADP-induced platelet aggregation in whole human blood and this effect is concentration-dependent with an IC(50) of 34 nM. This chain is Zinc metalloproteinase/disintegrin VMP-II, found in Crotalus viridis viridis (Prairie rattlesnake).